The sequence spans 292 residues: S-adenosyl-L-methionine-dependent Diels-Alderase iccD (292 aa).

Residues 240–262 (LPVVRMFYVVLLVPYLFVRLLGI) traverse the membrane as a helical segment.

The protein belongs to the class I-like SAM-binding methyltransferase superfamily. Erg6/SMT family. It depends on S-adenosyl-L-methionine as a cofactor.

The protein localises to the membrane. The enzyme catalyses 3-[(2E,4E,8S,10E,12Z)-4,8-dimethyltetradeca-2,4,10,12-tetraenoyl]-4-hydroxy-5-(4-hydroxyphenyl)-1,2-dihydropyridin-2-one = 8-epi-ilicicolin H. The protein operates within mycotoxin biosynthesis. S-adenosyl-l-methionine-dependent Diels-Alderase; part of the gene cluster that mediates the biosynthesis of ilicicolin H, a 4-hydroxy-2-pyridonealkaloid that has potent and broad antifungal activities by inhibiting the mitochondrial respiration chain. IccD catalyzes the Diels-Alder reaction that converts the acyclic 2-pyridone intermediate to 8-epi-ilicicolin H. The biosynthesis of ilicicolin H starts with formation of the tetramic acid by the hybrid PKS-NRPS synthetase iccA with the partnering trans-enoyl reductase iccB since iccA lacks a designated enoylreductase (ER) domain. The cytochrome P450 monooxygenase iccC then catalyzes the ring expansion of the tetramate to the acyclic 2-pyridone. The pericyclase iccD further converts the acyclic 2-pyridone into 8-epi-ilicicolin H. Finally, the epimerase iccE converts 8-epi-ilicicolin H into ilicicolin H via epimerization. IccA to iccE are sufficient for ilicicolin H biosynthesis and the roles of the remaining enzymes, iccF, iccG and iccH within the pathway have still to be determined. This is S-adenosyl-L-methionine-dependent Diels-Alderase iccD from Talaromyces variabilis (Penicillium variabile).